Consider the following 429-residue polypeptide: Saccharopine dehydrogenase-like oxidoreductase (429 aa).

Ala2 bears the N-acetylalanine mark. A Phosphoserine modification is found at Ser217.

Belongs to the saccharopine dehydrogenase family.

This chain is Saccharopine dehydrogenase-like oxidoreductase (SCCPDH), found in Homo sapiens (Human).